The following is a 164-amino-acid chain: UPF0251 protein MA_0157 (164 aa).

Residues 91-124 (GDYRMPRGDGTGPAGQGPVGGGRSRGQGKGRGGR) are disordered. Gly residues predominate over residues 99–115 (DGTGPAGQGPVGGGRSR).

This sequence belongs to the UPF0251 family.

The chain is UPF0251 protein MA_0157 from Methanosarcina acetivorans (strain ATCC 35395 / DSM 2834 / JCM 12185 / C2A).